A 354-amino-acid chain; its full sequence is Methylthioribose-1-phosphate isomerase (354 aa).

The active-site Proton donor is aspartate 246.

It belongs to the eIF-2B alpha/beta/delta subunits family. MtnA subfamily.

The protein localises to the cytoplasm. It localises to the nucleus. The enzyme catalyses 5-(methylsulfanyl)-alpha-D-ribose 1-phosphate = 5-(methylsulfanyl)-D-ribulose 1-phosphate. Its pathway is amino-acid biosynthesis; L-methionine biosynthesis via salvage pathway; L-methionine from S-methyl-5-thio-alpha-D-ribose 1-phosphate: step 1/6. In terms of biological role, catalyzes the interconversion of methylthioribose-1-phosphate (MTR-1-P) into methylthioribulose-1-phosphate (MTRu-1-P). This is Methylthioribose-1-phosphate isomerase (mri1) from Xenopus tropicalis (Western clawed frog).